The sequence spans 437 residues: GTPase Der (437 aa).

EngA-type G domains follow at residues 3–167 (NLVA…KKES) and 176–352 (PRFA…ENRM). Residues 9–16 (GRPNVGKS), 56–60 (DTGGW), 119–122 (NKTD), 182–189 (GRPNAGKS), 229–233 (DTAGI), and 294–297 (NKWD) each bind GTP. One can recognise a KH-like domain in the interval 353-437 (IKIPTARLNE…TPINIYIRQK (85 aa)).

The protein belongs to the TRAFAC class TrmE-Era-EngA-EngB-Septin-like GTPase superfamily. EngA (Der) GTPase family. In terms of assembly, associates with the 50S ribosomal subunit.

GTPase that plays an essential role in the late steps of ribosome biogenesis. The protein is GTPase Der of Bacteroides fragilis (strain ATCC 25285 / DSM 2151 / CCUG 4856 / JCM 11019 / LMG 10263 / NCTC 9343 / Onslow / VPI 2553 / EN-2).